Here is a 252-residue protein sequence, read N- to C-terminus: Large ribosomal subunit protein uL4 (252 aa).

Belongs to the universal ribosomal protein uL4 family. Part of the 50S ribosomal subunit.

One of the primary rRNA binding proteins, this protein initially binds near the 5'-end of the 23S rRNA. It is important during the early stages of 50S assembly. It makes multiple contacts with different domains of the 23S rRNA in the assembled 50S subunit and ribosome. Its function is as follows. Forms part of the polypeptide exit tunnel. In Methanocaldococcus jannaschii (strain ATCC 43067 / DSM 2661 / JAL-1 / JCM 10045 / NBRC 100440) (Methanococcus jannaschii), this protein is Large ribosomal subunit protein uL4.